We begin with the raw amino-acid sequence, 77 residues long: MNPIVEFCVNNLASGADAAFAKLDADDSLDVIEYDCLTYCDLCATSLFALVDGEVVRGETAEELVANIYTFLEENPF.

This sequence belongs to the UPF0349 family.

This Listeria innocua serovar 6a (strain ATCC BAA-680 / CLIP 11262) protein is UPF0349 protein lin2491.